The chain runs to 342 residues: Eukaryotic translation initiation factor 3 subunit F (342 aa).

The MPN domain maps to 30–166; that stretch reads VAIQPQAVFS…SRTYISAPIG (137 aa). The segment at 310 to 342 is disordered; that stretch reads TDALAGDGQKDGGDRKQGGDRRNKGRQQRTQEA. Residues 317–331 show a composition bias toward basic and acidic residues; that stretch reads GQKDGGDRKQGGDRR.

Belongs to the eIF-3 subunit F family. Component of the eukaryotic translation initiation factor 3 (eIF-3) complex.

The protein resides in the cytoplasm. Its function is as follows. Component of the eukaryotic translation initiation factor 3 (eIF-3) complex, which is involved in protein synthesis of a specialized repertoire of mRNAs and, together with other initiation factors, stimulates binding of mRNA and methionyl-tRNAi to the 40S ribosome. The eIF-3 complex specifically targets and initiates translation of a subset of mRNAs involved in cell proliferation. This is Eukaryotic translation initiation factor 3 subunit F from Phaeosphaeria nodorum (strain SN15 / ATCC MYA-4574 / FGSC 10173) (Glume blotch fungus).